We begin with the raw amino-acid sequence, 470 residues long: Siroheme synthase (470 aa).

Positions 1–203 (MEFFPIFLKL…GDEAAARAEM (203 aa)) are precorrin-2 dehydrogenase /sirohydrochlorin ferrochelatase. NAD(+) is bound by residues 22–23 (EV) and 43–44 (PE). S128 carries the phosphoserine modification. The uroporphyrinogen-III C-methyltransferase stretch occupies residues 216-470 (GAVYLVGAGP…ENSAVTIQED (255 aa)). Position 225 (P225) interacts with S-adenosyl-L-methionine. D248 acts as the Proton acceptor in catalysis. The active-site Proton donor is K270. S-adenosyl-L-methionine-binding positions include 301 to 303 (GGD), M383, and A412.

In the N-terminal section; belongs to the precorrin-2 dehydrogenase / sirohydrochlorin ferrochelatase family. The protein in the C-terminal section; belongs to the precorrin methyltransferase family.

It carries out the reaction uroporphyrinogen III + 2 S-adenosyl-L-methionine = precorrin-2 + 2 S-adenosyl-L-homocysteine + H(+). It catalyses the reaction precorrin-2 + NAD(+) = sirohydrochlorin + NADH + 2 H(+). The enzyme catalyses siroheme + 2 H(+) = sirohydrochlorin + Fe(2+). Its pathway is cofactor biosynthesis; adenosylcobalamin biosynthesis; precorrin-2 from uroporphyrinogen III: step 1/1. It functions in the pathway cofactor biosynthesis; adenosylcobalamin biosynthesis; sirohydrochlorin from precorrin-2: step 1/1. It participates in porphyrin-containing compound metabolism; siroheme biosynthesis; precorrin-2 from uroporphyrinogen III: step 1/1. The protein operates within porphyrin-containing compound metabolism; siroheme biosynthesis; siroheme from sirohydrochlorin: step 1/1. Its pathway is porphyrin-containing compound metabolism; siroheme biosynthesis; sirohydrochlorin from precorrin-2: step 1/1. Multifunctional enzyme that catalyzes the SAM-dependent methylations of uroporphyrinogen III at position C-2 and C-7 to form precorrin-2 via precorrin-1. Then it catalyzes the NAD-dependent ring dehydrogenation of precorrin-2 to yield sirohydrochlorin. Finally, it catalyzes the ferrochelation of sirohydrochlorin to yield siroheme. This chain is Siroheme synthase, found in Chromobacterium violaceum (strain ATCC 12472 / DSM 30191 / JCM 1249 / CCUG 213 / NBRC 12614 / NCIMB 9131 / NCTC 9757 / MK).